The chain runs to 245 residues: tRNA pseudouridine synthase A (245 aa).

Residue D52 is the Nucleophile of the active site. Y111 lines the substrate pocket.

It belongs to the tRNA pseudouridine synthase TruA family. Homodimer.

The catalysed reaction is uridine(38/39/40) in tRNA = pseudouridine(38/39/40) in tRNA. In terms of biological role, formation of pseudouridine at positions 38, 39 and 40 in the anticodon stem and loop of transfer RNAs. The sequence is that of tRNA pseudouridine synthase A from Thermotoga petrophila (strain ATCC BAA-488 / DSM 13995 / JCM 10881 / RKU-1).